Consider the following 490-residue polypeptide: Betaine aldehyde dehydrogenase (490 aa).

I27 and D93 together coordinate K(+). An NAD(+)-binding site is contributed by 150 to 152 (GAW). K162 serves as the catalytic Charge relay system. 176 to 179 (KPSE) is a binding site for NAD(+). V180 is a binding site for K(+). 230-233 (GTTT) contributes to the NAD(+) binding site. A K(+)-binding site is contributed by L246. The active-site Proton acceptor is E252. NAD(+)-binding residues include G254, C286, and E387. The active-site Nucleophile is the C286. C286 is subject to Cysteine sulfenic acid (-SOH). Positions 457 and 460 each coordinate K(+). Catalysis depends on E464, which acts as the Charge relay system.

The protein belongs to the aldehyde dehydrogenase family. Dimer of dimers. K(+) is required as a cofactor.

The catalysed reaction is betaine aldehyde + NAD(+) + H2O = glycine betaine + NADH + 2 H(+). It functions in the pathway amine and polyamine biosynthesis; betaine biosynthesis via choline pathway; betaine from betaine aldehyde: step 1/1. Its function is as follows. Involved in the biosynthesis of the osmoprotectant glycine betaine. Catalyzes the irreversible oxidation of betaine aldehyde to the corresponding acid. This chain is Betaine aldehyde dehydrogenase, found in Pseudomonas putida (strain ATCC 700007 / DSM 6899 / JCM 31910 / BCRC 17059 / LMG 24140 / F1).